The following is an 872-amino-acid chain: Paladin (872 aa).

The tract at residues 1-37 (MGTTASAAQQVPSTVPSSENVQGNGSGSSNVEDRNSL) is disordered. Gly-2 is lipidated: N-myristoyl glycine. Residues 186 to 210 (RRKENLHENLHDLEKGLRAENLELA) are a coiled coil.

The protein belongs to the paladin family.

The protein resides in the cytoplasm. It localises to the cytosol. The protein is Paladin (pald1) of Xenopus tropicalis (Western clawed frog).